A 355-amino-acid chain; its full sequence is MRKILVTGGAGFIGSAVVRHIIRNTRDAVVNVDKLTYAGNLESLTEVADNPRYAFEQVDICDRAELDRVFAQYRPDAVMHLAAESHVDRSIGSAGEFIQTNIVGTFNLLEAARAYWQQMPSEQHEAFRFHHISTDEVYGDLGGTDDLFTETAPYAPSSPYSASKASSDHLVRAWLRTYGLPTIVTNCSNNYGPYHFPEKLIPLMILNALDGKPLPVYGDGMQIRDWLFVEDHARALYQVVTEGVVGETYNIGGHNEKANIEVVKTICALLEELAPEKPAGVARYEDLITFVQDRPGHDVRYAVDAAKIRRDLGWLPLETFESGLRKTVQWYLDNKTWWQNVLNGSYRLERLGTGK.

NAD(+) contacts are provided by residues 12–13 (FI), 33–36 (DKLT), 59–60 (DI), 81–85 (LAAES), and threonine 100. Position 85 (serine 85) interacts with substrate. Position 134 (threonine 134) interacts with substrate. Residue aspartate 135 is the Proton donor of the active site. Residues glutamate 136 and tyrosine 160 each act as proton acceptor in the active site. 160 to 164 (YSASK) serves as a coordination point for NAD(+). A substrate-binding site is contributed by asparagine 189. Residue asparagine 190 coordinates NAD(+). Substrate contacts are provided by residues 199–200 (KL), 215–217 (PVY), arginine 224, asparagine 259, and 293–297 (DRPGH).

This sequence belongs to the NAD(P)-dependent epimerase/dehydratase family. dTDP-glucose dehydratase subfamily. Homodimer. It depends on NAD(+) as a cofactor.

The catalysed reaction is dTDP-alpha-D-glucose = dTDP-4-dehydro-6-deoxy-alpha-D-glucose + H2O. It functions in the pathway carbohydrate biosynthesis; dTDP-L-rhamnose biosynthesis. The protein operates within bacterial outer membrane biogenesis; LPS O-antigen biosynthesis. Functionally, catalyzes the dehydration of dTDP-D-glucose to form dTDP-6-deoxy-D-xylo-4-hexulose via a three-step process involving oxidation, dehydration and reduction. This chain is dTDP-glucose 4,6-dehydratase (rfbB1), found in Neisseria meningitidis serogroup B (strain ATCC BAA-335 / MC58).